Consider the following 78-residue polypeptide: Conotoxin 5 (78 aa).

Positions 1 to 22 are cleaved as a signal peptide; it reads MKLTCMMIVTVLFLTAWIFITA. A propeptide spanning residues 23–49 is cleaved from the precursor; sequence DNSRNGIENLPRMRRHEMKNPKASKLN. 3 disulfide bridges follow: Cys53/Cys69, Cys60/Cys73, and Cys68/Cys77.

This sequence belongs to the conotoxin O1 superfamily. As to expression, expressed by the venom duct.

The protein localises to the secreted. This Conus imperialis (Imperial cone) protein is Conotoxin 5.